The chain runs to 403 residues: MAKLIISDLDVKGKKVLVRVDFNVPIKDGVIGDDNRIVAALPTIKYIIEHGGKAILLSHLGRVKSDADKKELSLKPVAERLSELLDKPVTFVPSNEGKEVEEAIDNMKDGDVVVLENTRFQDIDNDFGKRESGNDPKLGEYWASLGDIFVNDAFGTAHRSHASNVGIATAMKENGKPAAAGYLLEKEIKYLGDAVDNPVHPFVTILGGAKVSDKIGVIENLIPKSDHILIGGGMAYTFLAAQGHKIGKSLFEADKVDLAKELLEKAGDKIVLPVDNVAATEFSNDASREVVGDDIPDNMMGLDIGPKTIAKFKDILKDAKTVVWNGPMGAFEMPNFAEGTLEVGRALANLTDATTIIGGGDSTAAAKQLGIAPKISHISTGGGASLNYLEGKVLPGIACVSDK.

Residues 21-23 (DFN), arginine 36, 59-62 (HLGR), arginine 119, and arginine 159 each bind substrate. ATP contacts are provided by residues lysine 214, glycine 301, glutamate 332, and 359-362 (GGDS).

This sequence belongs to the phosphoglycerate kinase family. As to quaternary structure, monomer.

The protein localises to the cytoplasm. It carries out the reaction (2R)-3-phosphoglycerate + ATP = (2R)-3-phospho-glyceroyl phosphate + ADP. The protein operates within carbohydrate degradation; glycolysis; pyruvate from D-glyceraldehyde 3-phosphate: step 2/5. In Lactobacillus acidophilus (strain ATCC 700396 / NCK56 / N2 / NCFM), this protein is Phosphoglycerate kinase.